The following is a 206-amino-acid chain: Triafestin-2 (206 aa).

Positions 1–18 (MKTILAVIFFGILAFAFA) are cleaved as a signal peptide. N-linked (GlcNAc...) asparagine glycosylation is found at Asn-25, Asn-55, and Asn-178.

Belongs to the calycin superfamily. Triabin family. In terms of assembly, interacts with host coagulation factor XII (F12) (inactive and activated) (via amino acids 1-77). Interacts with host high molecular weight kininogen (KNG1) (via amino acids 402-532). Salivary gland (at protein level).

It localises to the secreted. Its activity is regulated as follows. Zn(2+) modulates binding to host coagulation factor XII (F12) and high molecular weight kininogen (KNG1). In terms of biological role, suppresses activation of the host plasma kallikrein-kinin system, leading to inhibition of the intrinsic coagulation pathway. Blocks host coagulation factor XII (F12) and prekallikrein (KLKB1) reciprocal activation without affecting their amidolytic activities. Blocks binding of host F12 and high molecular weight kininogen (KNG1) to negatively charged surfaces. Attenuates generation of bradykinin by interfering with activation of host kallikrein-kinin system. This is Triafestin-2 from Triatoma infestans (Assassin bug).